Reading from the N-terminus, the 80-residue chain is Exodeoxyribonuclease 7 small subunit (80 aa).

The protein belongs to the XseB family. As to quaternary structure, heterooligomer composed of large and small subunits.

The protein resides in the cytoplasm. The catalysed reaction is Exonucleolytic cleavage in either 5'- to 3'- or 3'- to 5'-direction to yield nucleoside 5'-phosphates.. Bidirectionally degrades single-stranded DNA into large acid-insoluble oligonucleotides, which are then degraded further into small acid-soluble oligonucleotides. This Aliivibrio salmonicida (strain LFI1238) (Vibrio salmonicida (strain LFI1238)) protein is Exodeoxyribonuclease 7 small subunit.